Here is a 439-residue protein sequence, read N- to C-terminus: Xylose isomerase (439 aa).

Residues H101 and D104 contribute to the active site. Positions 232, 268, 271, 296, 307, 309, and 339 each coordinate Mg(2+).

Belongs to the xylose isomerase family. In terms of assembly, homotetramer. It depends on Mg(2+) as a cofactor.

The protein resides in the cytoplasm. The catalysed reaction is alpha-D-xylose = alpha-D-xylulofuranose. This chain is Xylose isomerase, found in Pectobacterium atrosepticum (strain SCRI 1043 / ATCC BAA-672) (Erwinia carotovora subsp. atroseptica).